The sequence spans 477 residues: Peptidyl-prolyl cis-trans isomerase FKBP53 (477 aa).

Disordered regions lie at residues 104–135 (DYEHDEDDSDGIDVGESEEDDSCEYDSEEDEQ) and 153–366 (AAAP…QVRT). The span at 264 to 274 (KSKKKKNQKEK) shows a compositional bias: basic residues. A compositionally biased stretch (polar residues) spans 299–321 (ISQISSNTKAQDGTANNAMSESS). The segment covering 322 to 331 (KTPDKSAEKK) has biased composition (basic and acidic residues). Over residues 351 to 366 (VEKQTPADSKSSQVRT) the composition is skewed to polar residues. Residues 389 to 477 (GKTVSVRYIG…TFDVELINVQ (89 aa)) enclose the PPIase FKBP-type domain.

The protein belongs to the FKBP-type PPIase family. In terms of assembly, interacts with histone H3. As to expression, broadly expressed in leaves, flowers, stems and roots. Detected in root apical meristem region and pollen.

Its subcellular location is the nucleus. It catalyses the reaction [protein]-peptidylproline (omega=180) = [protein]-peptidylproline (omega=0). Functionally, PPIases accelerate the folding of proteins. It catalyzes the cis-trans isomerization of proline imidic peptide bonds in oligopeptides. Histone chaperone possibly involved in H3/H4 deposition to the nucleosome. Associates with 18S rDNA chromatin and negatively regulates the level of its expression. This chain is Peptidyl-prolyl cis-trans isomerase FKBP53 (FKBP53), found in Arabidopsis thaliana (Mouse-ear cress).